Here is an 886-residue protein sequence, read N- to C-terminus: Alanine--tRNA ligase (886 aa).

Positions 568, 572, 670, and 674 each coordinate Zn(2+).

The protein belongs to the class-II aminoacyl-tRNA synthetase family. The cofactor is Zn(2+).

The protein resides in the cytoplasm. It carries out the reaction tRNA(Ala) + L-alanine + ATP = L-alanyl-tRNA(Ala) + AMP + diphosphate. Its function is as follows. Catalyzes the attachment of alanine to tRNA(Ala) in a two-step reaction: alanine is first activated by ATP to form Ala-AMP and then transferred to the acceptor end of tRNA(Ala). Also edits incorrectly charged Ser-tRNA(Ala) and Gly-tRNA(Ala) via its editing domain. This chain is Alanine--tRNA ligase, found in Prochlorococcus marinus (strain NATL1A).